The following is an 855-amino-acid chain: Suppressor of tumorigenicity 14 protein homolog (855 aa).

Over 1 to 55 the chain is Cytoplasmic; that stretch reads MGSNRGRKAGGGSQDFGAGLKYNSRLENMNGFEEGVEFLPANNAKKVEKRGPRRW. Serine 13 carries the phosphoserine modification. Residues 56–76 traverse the membrane as a helical; Signal-anchor for type II membrane protein segment; sequence VVLVAVLFSFLLLSLMAGLLV. Residues 77-855 are Extracellular-facing; it reads WHFHYRNVRV…RDWIKEHTGV (779 aa). Residues 86–203 enclose the SEA domain; sequence VQKVFNGHLR…TSVVAFPIDP (118 aa). Residue asparagine 107 is glycosylated (N-linked (GlcNAc...) asparagine). Cysteine 214 and cysteine 244 are disulfide-bonded. CUB domains lie at 214–331 and 340–444; these read CSFA…EATF and CGGF…LAEY. N-linked (GlcNAc...) asparagine glycosylation is found at asparagine 302 and asparagine 365. Intrachain disulfides connect cysteine 340–cysteine 366 and cysteine 397–cysteine 410. Asparagine 421 is a glycosylation site (N-linked (GlcNAc...) asparagine). 4 LDL-receptor class A domains span residues 451 to 488, 489 to 522, 523 to 561, and 565 to 604; these read DPCP…YCRC, NATH…DEEG, CSCP…SCDS, and VSCT…NCDC. 13 disulfides stabilise this stretch: cysteine 453–cysteine 464, cysteine 459–cysteine 477, cysteine 471–cysteine 486, cysteine 488–cysteine 501, cysteine 496–cysteine 514, cysteine 508–cysteine 523, cysteine 525–cysteine 537, cysteine 532–cysteine 550, cysteine 544–cysteine 559, cysteine 567–cysteine 579, cysteine 574–cysteine 593, cysteine 587–cysteine 602, and cysteine 641–cysteine 657. A glycan (N-linked (GlcNAc...) asparagine) is linked at asparagine 489. The Peptidase S1 domain maps to 615–854; that stretch reads VVGGTNADEG…VRDWIKEHTG (240 aa). Residues histidine 656 and aspartate 711 each act as charge relay system in the active site. The N-linked (GlcNAc...) asparagine glycan is linked to asparagine 772. Disulfide bonds link cysteine 776/cysteine 790 and cysteine 801/cysteine 830. Serine 805 (charge relay system) is an active-site residue.

It belongs to the peptidase S1 family. As to quaternary structure, interacts with CDCP1. May interact with TMEFF1. Highly expressed in intestine, kidney, lung, and thymus. Not expressed in skeletal muscle, liver, heart, testis and brain.

It localises to the membrane. The catalysed reaction is Cleaves various synthetic substrates with Arg or Lys at the P1 position and prefers small side-chain amino acids, such as Ala and Gly, at the P2 position.. In terms of biological role, exhibits trypsin-like activity as defined by cleavage of synthetic substrates with Arg or Lys as the P1 site. Involved in the terminal differentiation of keratinocytes through prostasin (PRSS8) activation and filaggrin (FLG) processing. Proteolytically cleaves and therefore activates TMPRSS13. This Mus musculus (Mouse) protein is Suppressor of tumorigenicity 14 protein homolog (St14).